The sequence spans 628 residues: ATP-dependent zinc metalloprotease FtsH (628 aa).

At 1–7 the chain is on the stromal side; sequence MKLSWKT. The chain crosses the membrane as a helical span at residues 8-28; it reads LLLWSLPIFVVGFFFWQGFLG. Residues 29 to 118 are Lumenal-facing; that stretch reads PTTTDVGSNI…AHPPKSTSAV (90 aa). Residues 119–139 form a helical membrane-spanning segment; that stretch reads WGLLGNLLFPLILVGGLAFLF. Over 140–628 the chain is Stromal; the sequence is RRSNNASGGP…PEKNYYISQF (489 aa). 213–220 is an ATP binding site; it reads GPPGTGKT. Zn(2+) is bound at residue H434. E435 is an active-site residue. Zn(2+) is bound by residues H438 and D512.

The protein in the central section; belongs to the AAA ATPase family. In the C-terminal section; belongs to the peptidase M41 family. In terms of assembly, homohexamer. The cofactor is Zn(2+).

It localises to the plastid. The protein localises to the chloroplast thylakoid membrane. Acts as a processive, ATP-dependent zinc metallopeptidase. In Porphyra purpurea (Red seaweed), this protein is ATP-dependent zinc metalloprotease FtsH.